Here is a 315-residue protein sequence, read N- to C-terminus: Lipoyl synthase (315 aa).

Residues Cys-62, Cys-67, Cys-73, Cys-88, Cys-92, Cys-95, and Ser-302 each coordinate [4Fe-4S] cluster. Residues 73 to 291 enclose the Radical SAM core domain; the sequence is CFGHGTATFM…GELAKKLGFS (219 aa).

This sequence belongs to the radical SAM superfamily. Lipoyl synthase family. [4Fe-4S] cluster is required as a cofactor.

Its subcellular location is the cytoplasm. It carries out the reaction [[Fe-S] cluster scaffold protein carrying a second [4Fe-4S](2+) cluster] + N(6)-octanoyl-L-lysyl-[protein] + 2 oxidized [2Fe-2S]-[ferredoxin] + 2 S-adenosyl-L-methionine + 4 H(+) = [[Fe-S] cluster scaffold protein] + N(6)-[(R)-dihydrolipoyl]-L-lysyl-[protein] + 4 Fe(3+) + 2 hydrogen sulfide + 2 5'-deoxyadenosine + 2 L-methionine + 2 reduced [2Fe-2S]-[ferredoxin]. The protein operates within protein modification; protein lipoylation via endogenous pathway; protein N(6)-(lipoyl)lysine from octanoyl-[acyl-carrier-protein]: step 2/2. Functionally, catalyzes the radical-mediated insertion of two sulfur atoms into the C-6 and C-8 positions of the octanoyl moiety bound to the lipoyl domains of lipoate-dependent enzymes, thereby converting the octanoylated domains into lipoylated derivatives. This Coxiella burnetii (strain CbuG_Q212) (Coxiella burnetii (strain Q212)) protein is Lipoyl synthase.